Reading from the N-terminus, the 143-residue chain is Large ribosomal subunit protein uL16c (143 aa).

It belongs to the universal ribosomal protein uL16 family. Part of the 50S ribosomal subunit.

It localises to the plastid. Its subcellular location is the chloroplast. The chain is Large ribosomal subunit protein uL16c from Cyanidioschyzon merolae (strain NIES-3377 / 10D) (Unicellular red alga).